We begin with the raw amino-acid sequence, 369 residues long: Endophilin-A (369 aa).

The region spanning 18–248 is the BAR domain; it reads TEKMGGAEGT…LQEKRAEAES (231 aa). Residues 227–249 are a coiled coil; the sequence is QCADVLRGLQETLQEKRAEAESR. Residues 275-294 are compositionally biased toward low complexity; sequence GTPSHISSSASPLPSPMRSP. The interval 275 to 297 is disordered; that stretch reads GTPSHISSSASPLPSPMRSPAKS. The SH3 domain occupies 305 to 364; the sequence is QQQPCCQALYDFDPENPGELGFKENDIITLLNRVDDNWYEGAVNGRTGYFPQSYVQVQVP.

The protein belongs to the endophilin family.

Its subcellular location is the cytoplasm. The protein localises to the membrane. Its function is as follows. Required presynaptically at the neuromuscular junction. Implicated in synaptic vesicle endocytosis. In Drosophila virilis (Fruit fly), this protein is Endophilin-A.